A 503-amino-acid polypeptide reads, in one-letter code: MSIKAEEISSLIKQQLEHYDDKLDIEEVGVVTYVGDGIARAHGLNNVLSSELLQFDNGAYGIAQNLESNDVGIIILGKFDDIREGDRVKRTGRIMEVPVGDALIGRVVNPLGQPVDGLGEIKTDKTRPIESKAPGVMQRQSVNQPLQTGIKAIDALVPIGRGQRELVIGDRKTGKTSLAIDTILNQKGQDVICIYVSIGQKESTVRAQVETLKKLGAMDYTIVVEAGPSEPAPMLYIAPYSGIAMGEEFMYAGKDVLVVFDDLSKQAVAYRELSLLLRRPPGREAYPGDVFYLHSRLLERSAKLSKELGGGSLTALPVIQTEAGDISAYIPTNVISITDGQIFLQSDMFFSGTRPAIDAGASVSRVGGAAQIPAMKKVAGTLRTDLASYRELESFAQFGSDLDQATQAKLARGRRTVEVLKQPLHKPVAVEKQVVLLYALTHGFMDAVSVDDIARFEQELYTDFDANHADLLAEIKSTGKLPDENKLQEALQQFASSFSSSNK.

169–176 provides a ligand contact to ATP; it reads GDRKTGKT.

This sequence belongs to the ATPase alpha/beta chains family. F-type ATPases have 2 components, CF(1) - the catalytic core - and CF(0) - the membrane proton channel. CF(1) has five subunits: alpha(3), beta(3), gamma(1), delta(1), epsilon(1). CF(0) has three main subunits: a(1), b(2) and c(9-12). The alpha and beta chains form an alternating ring which encloses part of the gamma chain. CF(1) is attached to CF(0) by a central stalk formed by the gamma and epsilon chains, while a peripheral stalk is formed by the delta and b chains.

It localises to the cell membrane. It carries out the reaction ATP + H2O + 4 H(+)(in) = ADP + phosphate + 5 H(+)(out). Its function is as follows. Produces ATP from ADP in the presence of a proton gradient across the membrane. The alpha chain is a regulatory subunit. The chain is ATP synthase subunit alpha from Lactobacillus delbrueckii subsp. bulgaricus (strain ATCC BAA-365 / Lb-18).